The primary structure comprises 251 residues: Putative F-box protein L166 (251 aa).

Residues 1-46 (MDNICELFDEILPLIIEYLSDHDKVKFMTTCSRLYYFIDKVYYENI) form the F-box domain. The interval 188 to 251 (PEPESQENFR…RPKSFMKYRR (64 aa)) is disordered. Residues 202–217 (TESNNNKPVNKSQPQI) are compositionally biased toward polar residues. Basic residues predominate over residues 241–251 (KRPKSFMKYRR).

The chain is Putative F-box protein L166 from Acanthamoeba polyphaga (Amoeba).